We begin with the raw amino-acid sequence, 409 residues long: L-cysteine:1D-myo-inositol 2-amino-2-deoxy-alpha-D-glucopyranoside ligase (409 aa).

A Zn(2+)-binding site is contributed by Cys43. L-cysteinyl-5'-AMP contacts are provided by residues 43–46 (CGIT), Thr58, and 81–83 (NVT). The short motif at 45-55 (ITPYDATHMGH) is the 'HIGH' region element. The 'ERGGDP' region signature appears at 183 to 188 (ERGGDP). Position 224 (Trp224) interacts with L-cysteinyl-5'-AMP. Cys228 lines the Zn(2+) pocket. 246–248 (GSD) provides a ligand contact to L-cysteinyl-5'-AMP. His253 contacts Zn(2+). Residue Val280 participates in L-cysteinyl-5'-AMP binding. Positions 286–290 (KMSKS) match the 'KMSKS' region motif.

This sequence belongs to the class-I aminoacyl-tRNA synthetase family. MshC subfamily. Monomer. Requires Zn(2+) as cofactor.

The enzyme catalyses 1D-myo-inositol 2-amino-2-deoxy-alpha-D-glucopyranoside + L-cysteine + ATP = 1D-myo-inositol 2-(L-cysteinylamino)-2-deoxy-alpha-D-glucopyranoside + AMP + diphosphate + H(+). Functionally, catalyzes the ATP-dependent condensation of GlcN-Ins and L-cysteine to form L-Cys-GlcN-Ins. This Streptomyces griseus subsp. griseus (strain JCM 4626 / CBS 651.72 / NBRC 13350 / KCC S-0626 / ISP 5235) protein is L-cysteine:1D-myo-inositol 2-amino-2-deoxy-alpha-D-glucopyranoside ligase.